A 185-amino-acid polypeptide reads, in one-letter code: Ribosome-recycling factor (185 aa).

Belongs to the RRF family.

Its subcellular location is the cytoplasm. Responsible for the release of ribosomes from messenger RNA at the termination of protein biosynthesis. May increase the efficiency of translation by recycling ribosomes from one round of translation to another. This is Ribosome-recycling factor from Xanthomonas euvesicatoria pv. vesicatoria (strain 85-10) (Xanthomonas campestris pv. vesicatoria).